Here is a 904-residue protein sequence, read N- to C-terminus: Mdm2-binding protein (904 aa).

Positions 19–38 (ASREAEHGPEVSSGEGTENQ) are disordered. The tract at residues 521-904 (MILRKMDKIK…DWVLEKTSKK (384 aa)) is interaction with MDM2. Phosphoserine occurs at positions 597, 639, 703, and 707. Disordered regions lie at residues 754 to 784 (ESSESLLSQTTGNSNHYHHHVTSRKPQTERS) and 800 to 830 (PKLATKTSSGQKSMHESKTSRQIKESRSQKH). Over residues 812-830 (SMHESKTSRQIKESRSQKH) the composition is skewed to basic and acidic residues.

Belongs to the MTBP family. In terms of assembly, interacts with MDM2.

Functionally, inhibits cell migration in vitro and suppresses the invasive behavior of tumor cells. May play a role in MDM2-dependent p53/TP53 homeostasis in unstressed cells. Inhibits autoubiquitination of MDM2, thereby enhancing MDM2 stability. This promotes MDM2-mediated ubiquitination of p53/TP53 and its subsequent degradation. This Homo sapiens (Human) protein is Mdm2-binding protein (MTBP).